A 560-amino-acid polypeptide reads, in one-letter code: Mitogen-activated protein kinase kinase kinase 3 (560 aa).

Positions Lys70 to Thr91 are disordered. Positions Trp303 to Val557 constitute a Protein kinase domain. Residues Leu309 to Val317 and Lys331 each bind ATP. The active-site Proton acceptor is Asp426.

Belongs to the protein kinase superfamily. STE Ser/Thr protein kinase family. MAP kinase kinase kinase subfamily. In terms of tissue distribution, expressed at low levels in roots, stems, siliques, leaves, seedlings and flower buds.

It carries out the reaction L-seryl-[protein] + ATP = O-phospho-L-seryl-[protein] + ADP + H(+). The enzyme catalyses L-threonyl-[protein] + ATP = O-phospho-L-threonyl-[protein] + ADP + H(+). This chain is Mitogen-activated protein kinase kinase kinase 3, found in Arabidopsis thaliana (Mouse-ear cress).